A 257-amino-acid chain; its full sequence is MAAPAPGLISVFSSPQELGASLAQLVAQRAASCLEGNRGRFALGLSGGSLVSMLARDLPAATAPAGPASFARWTLGFCDERLVPFDHAESTYGLYRTHLLSKLPIPDSQVLTIDPALPVEDAAEDYARKLRQAFQGDTVPVFDLLILGVGPDGHTCSLFPGHPLLQEREKIVAPIGDSPKPPPQRVTLTLPVLNAAQSVIFVATGEGKAAVLKRILEDQESALPAAMVQPRTGALCWFLDEAAARLLSVPFEKHSTL.

Alanine 2 is modified (N-acetylalanine). Serine 49 bears the Phosphoserine mark. An N6-acetyllysine modification is found at lysine 180.

The protein belongs to the glucosamine/galactosamine-6-phosphate isomerase family. 6-phosphogluconolactonase subfamily.

The protein resides in the cytoplasm. It carries out the reaction 6-phospho-D-glucono-1,5-lactone + H2O = 6-phospho-D-gluconate + H(+). The protein operates within carbohydrate degradation; pentose phosphate pathway; D-ribulose 5-phosphate from D-glucose 6-phosphate (oxidative stage): step 2/3. Hydrolysis of 6-phosphogluconolactone to 6-phosphogluconate. In Rattus norvegicus (Rat), this protein is 6-phosphogluconolactonase.